Here is a 72-residue protein sequence, read N- to C-terminus: MTPYLKIIKSSYTLLSFFYFIANTIIRTIQNVPTSHKIILVSLYYLVFSLFITRIFYGSPLKIISTYIYGKF.

2 helical membrane-spanning segments follow: residues 6–26 (KIIK…NTII) and 38–58 (IILV…IFYG).

Its subcellular location is the membrane. This chain is Putative transmembrane protein DDB_G0272126, found in Dictyostelium discoideum (Social amoeba).